Reading from the N-terminus, the 589-residue chain is Monocopper oxidase-like protein SKS1 (589 aa).

Residues 1–24 form the signal peptide; it reads MAATCSLLASFLLCFALLSAVSFA. N-linked (GlcNAc...) asparagine glycosylation is found at Asn-62, Asn-111, Asn-204, Asn-243, Asn-260, Asn-296, Asn-345, Asn-365, Asn-433, and Asn-447. A disordered region spans residues 322-356; the sequence is LPVPKTDVSSPWSAMSQPKTIRQNTSASGARPNPQ. Over residues 328–349 the composition is skewed to polar residues; the sequence is DVSSPWSAMSQPKTIRQNTSAS. His-455 contacts Cu cation. A lipid anchor (GPI-anchor amidated serine) is attached at Ser-563. Positions 564-589 are cleaved as a propeptide — removed in mature form; sequence AATSILNGHLKLMLLMVLLASVFRFC.

It belongs to the multicopper oxidase family. It depends on Cu cation as a cofactor.

The protein resides in the cell membrane. This Arabidopsis thaliana (Mouse-ear cress) protein is Monocopper oxidase-like protein SKS1 (SKS1).